Reading from the N-terminus, the 372-residue chain is Cytochrome b (372 aa).

The next 4 helical transmembrane spans lie at 25–45 (FGSMLLTCLALQTSTGFFLAI), 69–90 (WIIQNLHAIGASMFFICIYTHI), 105–125 (WLSGTMLLIMLMATSFFGYVL), and 170–190 (FFALHFILPFMIISLSSIHII). Positions 75 and 89 each coordinate heme b. Positions 174 and 188 each coordinate heme b. His-193 contributes to the a ubiquinone binding site. 4 helical membrane passes run 218-238 (YKDTLMITAMITSMLIIMSFM), 280-300 (LGGTLALLMSILILTTAPFTH), 312-332 (LTQIMFWTLIVTFITITWSAT), and 339-358 (FIFISQTASIIYFSFFIINP).

The protein belongs to the cytochrome b family. The cytochrome bc1 complex contains 3 respiratory subunits (MT-CYB, CYC1 and UQCRFS1), 2 core proteins (UQCRC1 and UQCRC2) and probably 6 low-molecular weight proteins. Heme b serves as cofactor.

The protein localises to the mitochondrion inner membrane. Its function is as follows. Component of the ubiquinol-cytochrome c reductase complex (complex III or cytochrome b-c1 complex) that is part of the mitochondrial respiratory chain. The b-c1 complex mediates electron transfer from ubiquinol to cytochrome c. Contributes to the generation of a proton gradient across the mitochondrial membrane that is then used for ATP synthesis. This is Cytochrome b (MT-CYB) from Hydrophis semperi (Lake Taal snake).